Consider the following 403-residue polypeptide: Aloesone synthase (403 aa).

Cysteine 174 is an active-site residue. CoA contacts are provided by residues serine 281 and 318 to 321 (GGRA).

Belongs to the thiolase-like superfamily. Chalcone/stilbene synthases family. Homodimer.

Its pathway is secondary metabolite biosynthesis; flavonoid biosynthesis. Catalyzes the iterative condensations of 6, 7 or 8 molecules of malonyl-CoA to produce various aromatic polyketides. Produces the heptaketide aloesone, the aglycone of aloesin, from 7 molecules of malonyl-CoA as a major product. Also able to produce a hexaketide pyrone, a heptaketide 6-(2-acetyl-3,5-dihydroxybenzyl)-4-hydroxy-2-pyrone, a novel heptaketide 6-(2-(2,4-dihydroxy-6-methylphenyl)-2-oxoethyl)-4-hydroxy-2-pyrone and octaketides SEK4/SEK4b. The polypeptide is Aloesone synthase (PKS3) (Aloe arborescens (Kidachi aloe)).